The sequence spans 249 residues: Proteasome subunit alpha (249 aa).

This sequence belongs to the peptidase T1A family. The 20S proteasome core is composed of 14 alpha and 14 beta subunits that assemble into four stacked heptameric rings, resulting in a barrel-shaped structure. The two inner rings, each composed of seven catalytic beta subunits, are sandwiched by two outer rings, each composed of seven alpha subunits. The catalytic chamber with the active sites is on the inside of the barrel. Has a gated structure, the ends of the cylinder being occluded by the N-termini of the alpha-subunits. Is capped at one or both ends by the proteasome regulatory ATPase, PAN.

The protein localises to the cytoplasm. The formation of the proteasomal ATPase PAN-20S proteasome complex, via the docking of the C-termini of PAN into the intersubunit pockets in the alpha-rings, triggers opening of the gate for substrate entry. Interconversion between the open-gate and close-gate conformations leads to a dynamic regulation of the 20S proteasome proteolysis activity. Functionally, component of the proteasome core, a large protease complex with broad specificity involved in protein degradation. In Methanosarcina mazei (strain ATCC BAA-159 / DSM 3647 / Goe1 / Go1 / JCM 11833 / OCM 88) (Methanosarcina frisia), this protein is Proteasome subunit alpha.